The primary structure comprises 510 residues: ATP synthase subunit alpha (510 aa).

169-176 (GDRQTGKT) contacts ATP.

This sequence belongs to the ATPase alpha/beta chains family. As to quaternary structure, F-type ATPases have 2 components, CF(1) - the catalytic core - and CF(0) - the membrane proton channel. CF(1) has five subunits: alpha(3), beta(3), gamma(1), delta(1), epsilon(1). CF(0) has three main subunits: a(1), b(2) and c(9-12). The alpha and beta chains form an alternating ring which encloses part of the gamma chain. CF(1) is attached to CF(0) by a central stalk formed by the gamma and epsilon chains, while a peripheral stalk is formed by the delta and b chains.

The protein localises to the cell inner membrane. It catalyses the reaction ATP + H2O + 4 H(+)(in) = ADP + phosphate + 5 H(+)(out). Its function is as follows. Produces ATP from ADP in the presence of a proton gradient across the membrane. The alpha chain is a regulatory subunit. This Rickettsia rickettsii (strain Iowa) protein is ATP synthase subunit alpha.